Here is a 483-residue protein sequence, read N- to C-terminus: Sphingomyelin phosphodiesterase 5 (483 aa).

The disordered stretch occupies residues 1 to 20; that stretch reads MSLPDISRRRSPVPQEDWPL. A helical membrane pass occupies residues 80–100; it reads VLLPLVVVGLPLALVGLALWL. Glu-209 lines the Mg(2+) pocket. The active-site Proton acceptor is His-471.

This sequence belongs to the neutral sphingomyelinase family. Requires Mg(2+) as cofactor. The cofactor is Mn(2+). In terms of tissue distribution, highly expressed in testis, pancreas, epididymis, and brain.

Its subcellular location is the mitochondrion inner membrane. The protein resides in the endoplasmic reticulum membrane. The catalysed reaction is a sphingomyelin + H2O = phosphocholine + an N-acylsphing-4-enine + H(+). It carries out the reaction N-(hexadecanoyl)-sphing-4-enine-1-phosphocholine + H2O = N-hexadecanoylsphing-4-enine + phosphocholine + H(+). It participates in lipid metabolism; sphingolipid metabolism. Its activity is regulated as follows. Activated by anionic phospholipids, specially cardiolipin and phosphatidylserine. Catalyzes the hydrolysis of membrane sphingomyelin to form phosphorylcholine and ceramide. In Mus musculus (Mouse), this protein is Sphingomyelin phosphodiesterase 5.